Here is a 120-residue protein sequence, read N- to C-terminus: uncharacterized protein (120 aa).

The protein resides in the virion. This is an uncharacterized protein from Acanthamoeba polyphaga mimivirus (APMV).